We begin with the raw amino-acid sequence, 318 residues long: MKARGFKAKMRGFKIFSGSAHPAFGKEVSKHLGFPLSKAVIGKFSDGEINIQISESVRGKDIFIIQPTCVPVNDNLMELLVMVDALRRSSANSITAVLPYFGYARQDRKAAPRVPITAKMVANLMQEVGIERIITMDLHAGQIQGFFDVPVDNLYGSIVFRDYIRSKALKNPVIASPDVGGVTRARYFANQMGLDLIIVDKRREKANESEVMNIIGSAKERDVILVDDMIDTAGTICKAALALKEQGATSVMALGTHAVLSGNAIKRIKESALDEVVVTNSIPLVQKCDKITTLSVAPLFAEVIRRIYHNESVQSLFT.

ATP-binding positions include 46–48 (DGE) and 105–106 (RQ). Residues histidine 139 and aspartate 178 each contribute to the Mg(2+) site. Lysine 201 is an active-site residue. D-ribose 5-phosphate-binding positions include arginine 203, aspartate 227, and 231–235 (DTAGT).

This sequence belongs to the ribose-phosphate pyrophosphokinase family. Class I subfamily. As to quaternary structure, homohexamer. The cofactor is Mg(2+).

It localises to the cytoplasm. The catalysed reaction is D-ribose 5-phosphate + ATP = 5-phospho-alpha-D-ribose 1-diphosphate + AMP + H(+). It participates in metabolic intermediate biosynthesis; 5-phospho-alpha-D-ribose 1-diphosphate biosynthesis; 5-phospho-alpha-D-ribose 1-diphosphate from D-ribose 5-phosphate (route I): step 1/1. Its function is as follows. Involved in the biosynthesis of the central metabolite phospho-alpha-D-ribosyl-1-pyrophosphate (PRPP) via the transfer of pyrophosphoryl group from ATP to 1-hydroxyl of ribose-5-phosphate (Rib-5-P). The polypeptide is Ribose-phosphate pyrophosphokinase (Helicobacter pylori (strain ATCC 700392 / 26695) (Campylobacter pylori)).